We begin with the raw amino-acid sequence, 556 residues long: Glutamine--tRNA ligase (556 aa).

The short motif at 34–44 is the 'HIGH' region element; it reads PEPNGYLHIGH. Residues 35–37 and 41–47 each bind ATP; these read EPN and HIGHAKS. The L-glutamine site is built by aspartate 67 and tyrosine 212. ATP is bound by residues threonine 231, 261 to 262, and 269 to 271; these read RL and MSK. Positions 268–272 match the 'KMSKS' region motif; sequence VMSKR.

The protein belongs to the class-I aminoacyl-tRNA synthetase family. Monomer.

Its subcellular location is the cytoplasm. It catalyses the reaction tRNA(Gln) + L-glutamine + ATP = L-glutaminyl-tRNA(Gln) + AMP + diphosphate. In Vibrio parahaemolyticus serotype O3:K6 (strain RIMD 2210633), this protein is Glutamine--tRNA ligase.